The sequence spans 398 residues: ATP-dependent RNA helicase eIF4A (398 aa).

Positions 25 to 53 match the Q motif motif; sequence DSFDSMELKPELLRGIYAYGFERPSAIQQ. Residues 56–226 enclose the Helicase ATP-binding domain; sequence ILPIIKGNDV…TKFMRDPVRI (171 aa). ATP is bound at residue 69 to 76; it reads AQSGTGKT. A DEAD box motif is present at residues 174 to 177; the sequence is DEAD. The Helicase C-terminal domain maps to 237–398; sequence GIKQFYIAVE…EMPMNVADLI (162 aa).

The protein belongs to the DEAD box helicase family. eIF4A subfamily. In terms of assembly, component of the eIF4F complex, which composition varies with external and internal environmental conditions. It is composed of at least eIF4A, eIF4E and eIF4G.

It is found in the cytoplasm. The catalysed reaction is ATP + H2O = ADP + phosphate + H(+). In terms of biological role, ATP-dependent RNA helicase which is a subunit of the eIF4F complex involved in cap recognition and is required for mRNA binding to ribosome. In the current model of translation initiation, eIF4A unwinds RNA secondary structures in the 5'-UTR of mRNAs which is necessary to allow efficient binding of the small ribosomal subunit, and subsequent scanning for the initiator codon. This Neosartorya fischeri (strain ATCC 1020 / DSM 3700 / CBS 544.65 / FGSC A1164 / JCM 1740 / NRRL 181 / WB 181) (Aspergillus fischerianus) protein is ATP-dependent RNA helicase eIF4A (tif1).